The sequence spans 72 residues: Translation initiation factor IF-1 2 (72 aa).

The region spanning 1–72 (MAKEDTIQMQ…SRARIVFRAK (72 aa)) is the S1-like domain.

It belongs to the IF-1 family. In terms of assembly, component of the 30S ribosomal translation pre-initiation complex which assembles on the 30S ribosome in the order IF-2 and IF-3, IF-1 and N-formylmethionyl-tRNA(fMet); mRNA recruitment can occur at any time during PIC assembly.

The protein resides in the cytoplasm. Its function is as follows. One of the essential components for the initiation of protein synthesis. Stabilizes the binding of IF-2 and IF-3 on the 30S subunit to which N-formylmethionyl-tRNA(fMet) subsequently binds. Helps modulate mRNA selection, yielding the 30S pre-initiation complex (PIC). Upon addition of the 50S ribosomal subunit IF-1, IF-2 and IF-3 are released leaving the mature 70S translation initiation complex. The protein is Translation initiation factor IF-1 2 of Chromobacterium violaceum (strain ATCC 12472 / DSM 30191 / JCM 1249 / CCUG 213 / NBRC 12614 / NCIMB 9131 / NCTC 9757 / MK).